Here is a 98-residue protein sequence, read N- to C-terminus: MEHGDRHITVVDEQGNEQLCEILFTFESDDFGKSYVFYYPVSAEAEDEDGETEVHVSAFIPGDENEEGELLPIETEEEWDMIEEVWNTFCAEQEEGEE.

This sequence belongs to the UPF0473 family.

The polypeptide is UPF0473 protein GTNG_2486 (Geobacillus thermodenitrificans (strain NG80-2)).